The primary structure comprises 281 residues: 2,3,4,5-tetrahydropyridine-2,6-dicarboxylate N-succinyltransferase (281 aa).

2 residues coordinate substrate: Arg-108 and Asp-145.

Belongs to the transferase hexapeptide repeat family. Homotrimer.

It is found in the cytoplasm. The enzyme catalyses (S)-2,3,4,5-tetrahydrodipicolinate + succinyl-CoA + H2O = (S)-2-succinylamino-6-oxoheptanedioate + CoA. It functions in the pathway amino-acid biosynthesis; L-lysine biosynthesis via DAP pathway; LL-2,6-diaminopimelate from (S)-tetrahydrodipicolinate (succinylase route): step 1/3. The protein is 2,3,4,5-tetrahydropyridine-2,6-dicarboxylate N-succinyltransferase of Bradyrhizobium diazoefficiens (strain JCM 10833 / BCRC 13528 / IAM 13628 / NBRC 14792 / USDA 110).